The primary structure comprises 311 residues: Methionyl-tRNA formyltransferase (311 aa).

The tract at residues 33–52 (RPDRPAGRGRHQRSSPVREL) is disordered. 110-113 (SLLP) contacts (6S)-5,6,7,8-tetrahydrofolate.

Belongs to the Fmt family.

The catalysed reaction is L-methionyl-tRNA(fMet) + (6R)-10-formyltetrahydrofolate = N-formyl-L-methionyl-tRNA(fMet) + (6S)-5,6,7,8-tetrahydrofolate + H(+). Its function is as follows. Attaches a formyl group to the free amino group of methionyl-tRNA(fMet). The formyl group appears to play a dual role in the initiator identity of N-formylmethionyl-tRNA by promoting its recognition by IF2 and preventing the misappropriation of this tRNA by the elongation apparatus. The protein is Methionyl-tRNA formyltransferase of Parafrankia sp. (strain EAN1pec).